The sequence spans 187 residues: Signal peptidase complex catalytic subunit SEC11 (187 aa).

Topologically, residues 1–18 (MLSSLSPYMANPRNTLSQ) are cytoplasmic. Residues 19 to 39 (VLNFGLVLSSAFMVWKALSVI) traverse the membrane as a helical; Signal-anchor for type II membrane protein segment. At 40–187 (TNSASPVVVV…MGLMVMLQRE (148 aa)) the chain is on the lumenal side. Active-site charge relay system residues include Ser53 and His92. The N-linked (GlcNAc...) asparagine glycan is linked to Asn125. The Charge relay system role is filled by Asp129. Positions 173-184 (VLLGFMGLMVML) are C-terminal short (CTS) helix.

This sequence belongs to the peptidase S26B family. In terms of assembly, component of the signal peptidase complex (SPC) composed of a catalytic subunit SEC11 and three accessory subunits SPC1, SPC2 and SPC3. The complex induces a local thinning of the ER membrane which is used to measure the length of the signal peptide (SP) h-region of protein substrates. This ensures the selectivity of the complex towards h-regions shorter than 18-20 amino acids. SPC associates with the translocon complex.

Its subcellular location is the endoplasmic reticulum membrane. It carries out the reaction Cleavage of hydrophobic, N-terminal signal or leader sequences from secreted and periplasmic proteins.. Its function is as follows. Catalytic component of the signal peptidase complex (SPC) which catalyzes the cleavage of N-terminal signal sequences from nascent proteins as they are translocated into the lumen of the endoplasmic reticulum. Specifically cleaves N-terminal signal peptides that contain a hydrophobic alpha-helix (h-region) shorter than 18-20 amino acids. This chain is Signal peptidase complex catalytic subunit SEC11 (SEC11), found in Ajellomyces capsulatus (strain G186AR / H82 / ATCC MYA-2454 / RMSCC 2432) (Darling's disease fungus).